The sequence spans 460 residues: Oxysterols receptor LXR-beta (460 aa).

Over residues 1–14 (MSSPTTSSLDTPLP) the composition is skewed to low complexity. The segment at 1–78 (MSSPTTSSLD…PERKRKKGPA (78 aa)) is disordered. The interval 1–85 (MSSPTTSSLD…GPAPKMLGHE (85 aa)) is transactivation AF-1; required for ligand-independent transactivation function. The segment covering 36–45 (EPWPGGPDPD) has biased composition (pro residues). A DNA-binding region (nuclear receptor) is located at residues 84 to 161 (HELCRVCGDK…AGMREQCVLS (78 aa)). 2 NR C4-type zinc fingers span residues 87-107 (CRVCGDKASGFHYNVLSCEGC) and 125-149 (CRGGGTCQMDAFMRRKCQQCRLRKC). A disordered region spans residues 169–216 (KIRKQQQESQSQSQSPVGPQGSSSSASGPGASPGGSEAGSQGSGEGEG). A compositionally biased stretch (low complexity) spans 175 to 198 (QESQSQSQSPVGPQGSSSSASGPG). Residues 199–215 (ASPGGSEAGSQGSGEGE) are compositionally biased toward gly residues. The tract at residues 219–460 (LTAAQELMIQ…LLSEIWDVHE (242 aa)) is transactivation AF-2; required for ligand-dependent transactivation function; mediates interaction with CCAR2. The region spanning 222–460 (AQELMIQQLV…LLSEIWDVHE (239 aa)) is the NR LBD domain. Glycyl lysine isopeptide (Lys-Gly) (interchain with G-Cter in SUMO2) cross-links involve residues Lys409 and Lys447.

It belongs to the nuclear hormone receptor family. NR1 subfamily. As to quaternary structure, forms a heterodimer with RXR. Interacts with CCAR2 (via N-terminus) in a ligand-independent manner. Interacts (when sumoylated) with GPS2; interaction with GPS2 onto hepatic acute phase protein promoters prevents N-Cor corepressor complex dissociation. Interacts with ABCA12 and ABCA1; this interaction is required for ABCA1 localization to the cell surface and is necessary for its normal activity and stability. Sumoylated by SUMO2 at Lys-409 and Lys-447 during the hepatic acute phase response, leading to promote interaction with GPS2 and prevent N-Cor corepressor complex dissociation. In terms of tissue distribution, ubiquitous.

It localises to the nucleus. Its function is as follows. Nuclear receptor that exhibits a ligand-dependent transcriptional activation activity. Binds preferentially to double-stranded oligonucleotide direct repeats having the consensus half-site sequence 5'-AGGTCA-3' and 4-nt spacing (DR-4). Regulates cholesterol uptake through MYLIP-dependent ubiquitination of LDLR, VLDLR and LRP8; DLDLR and LRP8. Interplays functionally with RORA for the regulation of genes involved in liver metabolism. Induces LPCAT3-dependent phospholipid remodeling in endoplasmic reticulum (ER) membranes of hepatocytes, driving SREBF1 processing and lipogenesis. Via LPCAT3, triggers the incorporation of arachidonate into phosphatidylcholines of ER membranes, increasing membrane dynamics and enabling triacylglycerols transfer to nascent very low-density lipoprotein (VLDL) particles. Via LPCAT3 also counteracts lipid-induced ER stress response and inflammation, likely by modulating SRC kinase membrane compartmentalization and limiting the synthesis of lipid inflammatory mediators. Plays an anti-inflammatory role during the hepatic acute phase response by acting as a corepressor: inhibits the hepatic acute phase response by preventing dissociation of the N-Cor corepressor complex. The sequence is that of Oxysterols receptor LXR-beta (NR1H2) from Homo sapiens (Human).